The chain runs to 254 residues: 3-deoxy-manno-octulosonate cytidylyltransferase (254 aa).

Belongs to the KdsB family.

Its subcellular location is the cytoplasm. It carries out the reaction 3-deoxy-alpha-D-manno-oct-2-ulosonate + CTP = CMP-3-deoxy-beta-D-manno-octulosonate + diphosphate. The protein operates within nucleotide-sugar biosynthesis; CMP-3-deoxy-D-manno-octulosonate biosynthesis; CMP-3-deoxy-D-manno-octulosonate from 3-deoxy-D-manno-octulosonate and CTP: step 1/1. It participates in bacterial outer membrane biogenesis; lipopolysaccharide biosynthesis. Functionally, activates KDO (a required 8-carbon sugar) for incorporation into bacterial lipopolysaccharide in Gram-negative bacteria. This Haemophilus influenzae (strain 86-028NP) protein is 3-deoxy-manno-octulosonate cytidylyltransferase.